The following is a 361-amino-acid chain: Biotin synthase (361 aa).

The region spanning 47–278 (VHGDEVALCG…AAHIFVMGGR (232 aa)) is the Radical SAM core domain. The [4Fe-4S] cluster site is built by Cys65, Cys69, and Cys72. [2Fe-2S] cluster is bound by residues Ser110, Cys143, and Cys203. A disordered region spans residues 323 to 361 (TLRPPDTGKPWAFDGHAPSDADWNRKAAEPRPRPLPVVR). Residues 339-354 (APSDADWNRKAAEPRP) show a composition bias toward basic and acidic residues.

The protein belongs to the radical SAM superfamily. Biotin synthase family. Homodimer. Requires [4Fe-4S] cluster as cofactor. [2Fe-2S] cluster serves as cofactor.

The enzyme catalyses (4R,5S)-dethiobiotin + (sulfur carrier)-SH + 2 reduced [2Fe-2S]-[ferredoxin] + 2 S-adenosyl-L-methionine = (sulfur carrier)-H + biotin + 2 5'-deoxyadenosine + 2 L-methionine + 2 oxidized [2Fe-2S]-[ferredoxin]. It functions in the pathway cofactor biosynthesis; biotin biosynthesis; biotin from 7,8-diaminononanoate: step 2/2. Its function is as follows. Catalyzes the conversion of dethiobiotin (DTB) to biotin by the insertion of a sulfur atom into dethiobiotin via a radical-based mechanism. The sequence is that of Biotin synthase from Anaeromyxobacter sp. (strain K).